The chain runs to 908 residues: DNA (cytosine-5)-methyltransferase 3A (908 aa).

Residues 1–13 are compositionally biased toward low complexity; it reads MPSSGPGDTSSSS. Disordered stretches follow at residues 1–183 and 226–281; these read MPSS…PMPR and NQAS…PEYE. Residues 14–37 show a composition bias toward basic and acidic residues; sequence LEREDDRKEGEEQEENRGKEERQE. A compositionally biased stretch (basic residues) spans 44–54; that stretch reads KVGRPGRKRKH. Positions 69 to 80 are enriched in polar residues; it reads TTKSQPMAQDSG. Ser-102 carries the phosphoserine modification. Low complexity predominate over residues 110–124; the sequence is GAPAEGEGTETPPEA. Residue Thr-120 is modified to Phosphothreonine. Lys-158 is covalently cross-linked (Glycyl lysine isopeptide (Lys-Gly) (interchain with G-Cter in SUMO2)). Arg-167 is modified (omega-N-methylarginine). The interval 195–399 is interaction with DNMT1 and DNMT3B; sequence SKRKRDEWLA…DSGKAVEVQN (205 aa). Ser-239 and Ser-251 each carry phosphoserine. Residues 242–256 show a composition bias toward polar residues; the sequence is AVQQPTDPASPTVAT. Thr-257 carries the post-translational modification Phosphothreonine. Basic and acidic residues predominate over residues 265-275; it reads AGDKNATKAAD. A PWWP domain is found at 288–346; it reads IGELVWGKLRGFSWWPGRIVSWWMTGRSRAAEGTRWVMWFGDGKFSVVCVEKLMPLSSF. Ser-386 and Ser-389 each carry phosphoserine. Residues 443–462 form a disordered region; the sequence is AYAPPPPAKKPRKSTTEKPK. Residues 478–610 form the ADD domain; it reads EVRQKCRNIE…LQMFFANNHD (133 aa). The GATA-type; atypical zinc-finger motif lies at 489–519; it reads ICISCGSLNVTLEHPLFIGGMCQNCKNCFLE. Residues 490 to 582 form an interaction with the PRC2/EED-EZH2 complex region; that stretch reads CISCGSLNVT…KEDPWNCYMC (93 aa). A PHD-type; atypical zinc finger spans residues 530–586; the sequence is QSYCTICCGGREVLMCGNNNCCRCFCVECVDLLVGPGAAQAAIKEDPWNCYMCGHKG. In terms of domain architecture, SAM-dependent MTase C5-type spans 630–908; the sequence is IRVLSLFDGI…APLKEYFACV (279 aa). S-adenosyl-L-methionine is bound by residues 637 to 641, Glu-660, and 682 to 684; these read DGIAT and DVR. Cys-706 is an active-site residue. Cys-706 is subject to S-methylcysteine; by autocatalysis. 887-889 lines the S-adenosyl-L-methionine pocket; that stretch reads RSW.

It belongs to the class I-like SAM-binding methyltransferase superfamily. C5-methyltransferase family. Heterotetramer composed of 1 DNMT3A homodimer and 2 DNMT3L subunits (DNMT3L-DNMT3A-DNMT3A-DNMT3L). Interacts with DNMT1 and DNMT3B. Interacts with MPHOSPH8. Interacts with histone H3 that is not methylated at 'Lys-4' (H3K4). Binds the ZBTB18 transcriptional repressor. Interacts with SETDB1. Associates with HDAC1 through its ADD domain. Interacts with UHRF1. Interacts with the PRC2/EED-EZH2 complex. Interacts with UBC9, PIAS1 and PIAS2. Interacts with SPOCD1. Interacts with ZNF263; recruited to the SIX3 promoter along with other proteins involved in chromatin modification and transcriptional corepression where it contributes to transcriptional repression. Auto-methylated at Cys-706: auto-methylation takes place in absence of DNA substrate and inactivates the DNA methyltransferase activity. Inactivation by auto-methylation may be used to inactivate unused DNA methyltransferases in the cell. In terms of processing, sumoylated; sumoylation disrupts the ability to interact with histone deacetylases (HDAC1 and HDAC2) and repress transcription. As to expression, isoform 1 is expressed ubiquitously at low levels. Expression of isoform 2 is restricted to tissues containing cells which are undergoing active de novo methylation, including spleen, testis and thymus.

It is found in the nucleus. The protein resides in the chromosome. Its subcellular location is the cytoplasm. It carries out the reaction a 2'-deoxycytidine in DNA + S-adenosyl-L-methionine = a 5-methyl-2'-deoxycytidine in DNA + S-adenosyl-L-homocysteine + H(+). The enzyme catalyses L-cysteinyl-[protein] + S-adenosyl-L-methionine = S-methyl-L-cysteinyl-[protein] + S-adenosyl-L-homocysteine + H(+). Its activity is regulated as follows. Activated by binding to the regulatory factor DNMT3L. Auto-methylation at Cys-706 in absence of DNA inactivates the DNA methyltransferase activity. Required for genome-wide de novo methylation and is essential for the establishment of DNA methylation patterns during development. DNA methylation is coordinated with methylation of histones. It modifies DNA in a non-processive manner and also methylates non-CpG sites. May preferentially methylate DNA linker between 2 nucleosomal cores and is inhibited by histone H1. Plays a role in paternal and maternal imprinting. Required for methylation of most imprinted loci in germ cells. Acts as a transcriptional corepressor for ZBTB18. Recruited to trimethylated 'Lys-36' of histone H3 (H3K36me3) sites. Can actively repress transcription through the recruitment of HDAC activity. Also has weak auto-methylation activity on Cys-706 in absence of DNA. The protein is DNA (cytosine-5)-methyltransferase 3A of Mus musculus (Mouse).